A 245-amino-acid chain; its full sequence is MYPVDLHMHTVASTHAYSTLSDYIAEAKRKGIKLFAITDHGPDMEDAPHHWHFINMRIWPRLVDGVGILRGIEANIKNINGEIDCSGKMFDSLDLIIAGFHEPVFAPHDKETNTQAMIATIASGKVHIISHPGNPKYPVEVKAIAQAAAKHHVALEINNSSFLHSRKGSEDNCRAVAAAVRDAGGWVALGSDSHTAFTLGDFTECRKILDAVNFPEDRILNVSPQRLLAFLESRGMAPVPEFAEL.

Positions 7, 9, 15, 40, 73, 101, 131, 192, and 194 each coordinate Zn(2+).

The protein belongs to the PHP family. As to quaternary structure, homotrimer. The cofactor is Zn(2+).

The chain is Probable phosphatase YcdX from Salmonella agona (strain SL483).